The following is a 221-amino-acid chain: Sugar transporter SWEET1 (221 aa).

7 consecutive transmembrane segments (helical) span residues 3 to 23, 44 to 63, 68 to 88, 102 to 122, 129 to 149, 160 to 180, and 186 to 206; these read AGGV…LGMF, FLPF…YGVL, TLII…LAYL, ATLL…VPDL, LGLF…ADLA, LSFS…IYGF, and YITV…VLFY. A MtN3/slv 1 domain is found at 10–94; that stretch reads FLSSACVLFT…LAYLHYSPQK (85 aa). A MtN3/slv 2 domain is found at 127 to 212; it reads QQLGLFCSVF…VLFYKYPPEQ (86 aa). Residues 149-221 form a mediates interaction with TRPV2 region; the sequence is AKIIQTKSTQ…QDTKYRLLQT (73 aa).

The protein belongs to the SWEET sugar transporter family. As to quaternary structure, interacts with TRPV2; the interaction probably occurs intracellularly and depends on TRPV2 N-glycosylation.

The protein resides in the golgi apparatus membrane. It localises to the cell membrane. Functionally, mediates sugar transport across membranes. May stimulate V(D)J recombination by the activation of RAG1. The chain is Sugar transporter SWEET1 (Slc50a1) from Rattus norvegicus (Rat).